The sequence spans 434 residues: Glutamate/glutamine/aspartate/asparagine transport system permease protein BztC (434 aa).

10 helical membrane passes run 41-61, 113-133, 135-155, 156-176, 180-200, 227-247, 272-292, 298-318, 360-380, and 398-418; these read LTVF…PWLL, LFVT…DALP, KLIW…WGGP, IWGP…FTAL, LGVP…WLYA, FLLA…LGIL, GVPL…FLPP, LILR…AEVI, IVSS…VGLF, and GTYW…NFSM. The ABC transmembrane type-1 domain maps to 227 to 422; the sequence is FLLALVIGVT…LFNFSMSRYS (196 aa).

The protein belongs to the binding-protein-dependent transport system permease family. HisMQ subfamily. In terms of assembly, bztB and BztC form a heterodimer which can form a membrane complex with a homodimer of BztD.

The protein resides in the cell inner membrane. Functionally, part of a binding-protein-dependent transport system for glutamate, glutamine, aspartate and asparagine. Probably responsible for the translocation of the substrate across the membrane. In Rhodobacter capsulatus (strain ATCC BAA-309 / NBRC 16581 / SB1003), this protein is Glutamate/glutamine/aspartate/asparagine transport system permease protein BztC (bztC).